The following is a 151-amino-acid chain: Desiccation-related protein PCC27-45 (151 aa).

It belongs to the LEA type 2 family.

This chain is Desiccation-related protein PCC27-45, found in Craterostigma plantagineum (Blue gem).